The chain runs to 537 residues: MGCVQCKDKEATKLTEERDGSLNQSSGFRYGTDPTPQHYPSFGVTSIPNYNNFHAAGGQGLTVFGGVSSSSHTGTLRTRGGTGVTLFVALYDYEARTEDDLSFHKGEKFQILNSSEGDWWEARSLTTGETGYIPSNYVAPVDSIQAEEWYFGKLGRKDAERQLLSFGNPRGTFLIRESETTKGAYSLSIRDWDDMKGDHVKHYKIRKLDNGGYYITTRAQFETLQQLVQHYSERAAGLCCRLVVPCHKGMPRLTDLSVKTKDVWEIPRESLQLIKRLGNGQFGEVWMGTWNGNTKVAIKTLKPGTMSPESFLEEAQIMKKLKHDKLVQLYAVVSEEPIYIVTEYMNKGSLLDFLKDGEGRALKLPNLVDMAAQVAAGMAYIERMNYIHRDLRSANILVGNGLICKIADFGLARLIEDNEYTARQGAKFPIKWTAPEAALYGRFTIKSDVWSFGILLTELVTKGRVPYPGMNNREVLEQVERGYRMPCPQDCPISLHELMIHCWKKDPEERPTFEYLQGFLEDYFTATEPQYQPGENL.

The N-myristoyl glycine moiety is linked to residue Gly2. Residues Cys3 and Cys6 are each lipidated (S-palmitoyl cysteine). Residue Thr12 is modified to Phosphothreonine; by PKC. Residues Ser21 and Ser26 each carry the phosphoserine modification. The region spanning 82–143 (TGVTLFVALY…PSNYVAPVDS (62 aa)) is the SH3 domain. The SH2 domain maps to 149–246 (WYFGKLGRKD…GLCCRLVVPC (98 aa)). Tyr185 is modified (phosphotyrosine). The 254-residue stretch at 271–524 (LQLIKRLGNG…YLQGFLEDYF (254 aa)) folds into the Protein kinase domain. ATP is bound by residues 277–285 (LGNGQFGEV) and Lys299. Asp390 acts as the Proton acceptor in catalysis. Residue Tyr420 is modified to Phosphotyrosine; by autocatalysis. At Tyr531 the chain carries Phosphotyrosine; by CSK.

This sequence belongs to the protein kinase superfamily. Tyr protein kinase family. SRC subfamily. In terms of assembly, interacts (via its SH3 domain) with PIK3R1 and PRMT8. Interacts with FYB1, PAG1, and SH2D1A. Interacts with CD79A (tyrosine-phosphorylated form); the interaction increases FYN activity. Interacts (via SH2 domain) with CSF1R (tyrosine phosphorylated). Interacts with TOM1L1 (phosphorylated form). Interacts with KDR (tyrosine phosphorylated). Interacts (via SH3 domain) with KLHL2 (via N-terminus). Interacts with SH2D1A and SLAMF1. Interacts with ITCH; the interaction phosphorylates ITCH and negatively regulates its activity. Interacts with FASLG. Interacts with RUNX3. Interacts with KIT. Interacts with EPHA8; possible downstream effector of EPHA8 in regulation of cell adhesion. Interacts with PTK2/FAK1; this interaction leads to PTK2/FAK1 phosphorylation and activation. Interacts with CAV1; this interaction couples integrins to the Ras-ERK pathway. Interacts with UNC119. Interacts (via SH2 domain) with PTPRH (phosphorylated form). Interacts with PTPRO (phosphorylated form). Interacts with PTPRB (phosphorylated form). Interacts with FYB2. Interacts with DSCAM. Interacts with SKAP1 and FYB1; this interaction promotes the phosphorylation of CLNK. Interacts with NEDD9; in the presence of PTK2. The cofactor is Mn(2+). Autophosphorylated at Tyr-420. Phosphorylation on the C-terminal tail at Tyr-531 by CSK maintains the enzyme in an inactive state. PTPRC/CD45 dephosphorylates Tyr-531 leading to activation. Ultraviolet B (UVB) strongly increase phosphorylation at Thr-12 and kinase activity, and promotes translocation from the cytoplasm to the nucleus. Dephosphorylation at Tyr-420 by PTPN2 negatively regulates T-cell receptor signaling. Phosphorylated at tyrosine residues, which can be enhanced by NTN1. Post-translationally, palmitoylated. Palmitoylation at Cys-3 and Cys-6, probably by ZDHHC21, regulates subcellular location.

The protein resides in the cytoplasm. It is found in the nucleus. It localises to the cell membrane. The protein localises to the perikaryon. It catalyses the reaction L-tyrosyl-[protein] + ATP = O-phospho-L-tyrosyl-[protein] + ADP + H(+). Inhibited by phosphorylation of Tyr-531 by leukocyte common antigen and activated by dephosphorylation of this site. Functionally, non-receptor tyrosine-protein kinase that plays a role in many biological processes including regulation of cell growth and survival, cell adhesion, integrin-mediated signaling, cytoskeletal remodeling, cell motility, immune response and axon guidance. Inactive FYN is phosphorylated on its C-terminal tail within the catalytic domain. Following activation by PKA, the protein subsequently associates with PTK2/FAK1, allowing PTK2/FAK1 phosphorylation, activation and targeting to focal adhesions. Involved in the regulation of cell adhesion and motility through phosphorylation of CTNNB1 (beta-catenin) and CTNND1 (delta-catenin). Regulates cytoskeletal remodeling by phosphorylating several proteins including the actin regulator WAS and the microtubule-associated proteins MAP2 and MAPT. Promotes cell survival by phosphorylating AGAP2/PIKE-A and preventing its apoptotic cleavage. Participates in signal transduction pathways that regulate the integrity of the glomerular slit diaphragm (an essential part of the glomerular filter of the kidney) by phosphorylating several slit diaphragm components including NPHS1, KIRREL1 and TRPC6. Plays a role in neural processes by phosphorylating DPYSL2, a multifunctional adapter protein within the central nervous system, ARHGAP32, a regulator for Rho family GTPases implicated in various neural functions, and SNCA, a small pre-synaptic protein. Involved in reelin signaling by mediating phosphorylation of DAB1 following reelin (RELN)-binding to its receptor. Participates in the downstream signaling pathways that lead to T-cell differentiation and proliferation following T-cell receptor (TCR) stimulation. Phosphorylates PTK2B/PYK2 in response to T-cell receptor activation. Also participates in negative feedback regulation of TCR signaling through phosphorylation of PAG1, thereby promoting interaction between PAG1 and CSK and recruitment of CSK to lipid rafts. CSK maintains LCK and FYN in an inactive form. Promotes CD28-induced phosphorylation of VAV1. In mast cells, phosphorylates CLNK after activation of immunoglobulin epsilon receptor signaling. Can also promote CD244-mediated NK cell activation. This chain is Tyrosine-protein kinase Fyn, found in Sus scrofa (Pig).